We begin with the raw amino-acid sequence, 159 residues long: Eukaryotic translation initiation factor 5A-2 (159 aa).

Residues 1 to 10 are compositionally biased toward basic and acidic residues; that stretch reads MSDDEHHFEA. The segment at 1–25 is disordered; the sequence is MSDDEHHFEASESGASKTYPQSAGN. A Phosphoserine modification is found at S2. Over residues 13 to 24 the composition is skewed to polar residues; sequence SGASKTYPQSAG. Hypusine is present on K51.

It belongs to the eIF-5A family. In terms of assembly, homodimer. Interacts with AHK4 and AHP1. Cytokinin regulates the formation of the AHP1-AHK4-ELF5A-2 complex. Lys-51 undergoes hypusination, a unique post-translational modification that consists in the addition of a butylamino group from spermidine to lysine side chain, leading to the formation of the unusual amino acid hypusine. eIF-5As are the only known proteins to undergo this modification, which is essential for their function. Ubiquitous. In roots, expressed mostly inside the stele of the mature zone.

The protein resides in the cytoplasm. Its subcellular location is the nucleus. Translation factor that promotes translation elongation and termination, particularly upon ribosome stalling at specific amino acid sequence contexts. Binds between the exit (E) and peptidyl (P) site of the ribosome and promotes rescue of stalled ribosome: specifically required for efficient translation of polyproline-containing peptides as well as other motifs that stall the ribosome. Acts as a ribosome quality control (RQC) cofactor by joining the RQC complex to facilitate peptidyl transfer during CAT tailing step. Regulates cytokinin-mediated root protoxylem specification and represses secifically the expression of AHP6. Regulates the induction of programmed cell death caused by infection with virulent pathogen. The polypeptide is Eukaryotic translation initiation factor 5A-2 (ELF5A-2) (Arabidopsis thaliana (Mouse-ear cress)).